The following is a 311-amino-acid chain: tRNA-cytidine(32) 2-sulfurtransferase (311 aa).

The PP-loop motif motif lies at 47-52 (SGGKDS). 3 residues coordinate [4Fe-4S] cluster: Cys-122, Cys-125, and Cys-213.

The protein belongs to the TtcA family. Homodimer. Mg(2+) is required as a cofactor. The cofactor is [4Fe-4S] cluster.

Its subcellular location is the cytoplasm. It catalyses the reaction cytidine(32) in tRNA + S-sulfanyl-L-cysteinyl-[cysteine desulfurase] + AH2 + ATP = 2-thiocytidine(32) in tRNA + L-cysteinyl-[cysteine desulfurase] + A + AMP + diphosphate + H(+). It participates in tRNA modification. Its function is as follows. Catalyzes the ATP-dependent 2-thiolation of cytidine in position 32 of tRNA, to form 2-thiocytidine (s(2)C32). The sulfur atoms are provided by the cysteine/cysteine desulfurase (IscS) system. In Salmonella paratyphi A (strain ATCC 9150 / SARB42), this protein is tRNA-cytidine(32) 2-sulfurtransferase.